The sequence spans 558 residues: MDVLSILLILVAVGVGIFVGRQFLGQKQAPAPTYQPVPSPQILEEAKSKAEEIIKEAKEKAEVILKEAKESAEKIVREAEEKAEKLIREAKEEVERIKEEVERRKKELKEREENVLAKERHLDRRWEALEKREEELLHRERELKDFERSLERWRDEIRHKEEELKHMKEEVEELKKKELEELQRIAKLTLEEARQEIIKKVEEEAKKDAVKLMKVIEEDAKRRAEFEAKKIIATATQRLAPQIAVNYTTTTVELPSNEFKGRIIGREGRNIRTFEILTGVDLIIDDTPDIVTISSFDPLRREIAKEALQRLIADGRIHPARIEEVVDEVKREFDEKIRKIGEETVYELDLHDINPGLYYYIGKLYFRTSYSQNVLLHSKEVAYIAGLMAEELGLDAKLARRAGLLHDIGKAISHELGGSHTDIGVELARKYGEPDAVINAIRAHHEEEPVRYPEVALVCAADALSAARPGARRETLEAYIRRLEKLEEIVKSFKGVANAYAVQAGREVRVIVNPEEISDEEAYLLSKEIPKKIEEELDFPGQIKVVVIRETRHVEYAK.

Residues 3–23 (VLSILLILVAVGVGIFVGRQF) traverse the membrane as a helical segment. Residues 248–311 (TTTTVELPSN…EIAKEALQRL (64 aa)) form the KH domain. Residues 374-467 (VLLHSKEVAY…VCAADALSAA (94 aa)) form the HD domain.

Belongs to the RNase Y family.

The protein localises to the cell membrane. Endoribonuclease that initiates mRNA decay. This chain is Ribonuclease Y, found in Aquifex aeolicus (strain VF5).